A 735-amino-acid polypeptide reads, in one-letter code: Type-3 glutamine synthetase (735 aa).

The 95-residue stretch at 89 to 183 folds into the GS beta-grasp domain; that stretch reads THYCHWFLPL…IPTAFCSWTG (95 aa). The region spanning 188 to 621 is the GS catalytic domain; sequence QKTPLLRSME…SLYDLVSTLV (434 aa).

The protein belongs to the glutamine synthetase family. Type 3 subfamily. In terms of assembly, homohexamer.

It catalyses the reaction L-glutamate + NH4(+) + ATP = L-glutamine + ADP + phosphate + H(+). This is Type-3 glutamine synthetase (glnA3) from Dictyostelium discoideum (Social amoeba).